The following is a 277-amino-acid chain: Putative thiosulfate sulfurtransferase (277 aa).

2 consecutive Rhodanese domains span residues 18–125 (KAPK…PLSA) and 154–274 (AIGT…APIE). K67 is covalently cross-linked (Isoglutamyl lysine isopeptide (Lys-Gln) (interchain with Q-Cter in protein Pup)). Catalysis depends on C233, which acts as the Cysteine persulfide intermediate. Residue R238 coordinates substrate.

It carries out the reaction thiosulfate + hydrogen cyanide = thiocyanate + sulfite + 2 H(+). Its function is as follows. May be a sulfotransferase involved in the formation of thiosulfate. The chain is Putative thiosulfate sulfurtransferase from Mycolicibacterium smegmatis (strain ATCC 700084 / mc(2)155) (Mycobacterium smegmatis).